The sequence spans 273 residues: Undecaprenyl-diphosphatase (273 aa).

Helical transmembrane passes span 6 to 26, 45 to 65, 90 to 110, 116 to 136, 190 to 210, 222 to 242, and 252 to 272; these read SLLI…LPVS, AKTF…VMFW, LTLI…LVFH, LFNP…LIAA, YAAS…ATVL, ADIP…LIAI, and ISFI…YVVF.

The protein belongs to the UppP family.

It is found in the cell inner membrane. It catalyses the reaction di-trans,octa-cis-undecaprenyl diphosphate + H2O = di-trans,octa-cis-undecaprenyl phosphate + phosphate + H(+). In terms of biological role, catalyzes the dephosphorylation of undecaprenyl diphosphate (UPP). Confers resistance to bacitracin. The sequence is that of Undecaprenyl-diphosphatase from Salmonella arizonae (strain ATCC BAA-731 / CDC346-86 / RSK2980).